We begin with the raw amino-acid sequence, 680 residues long: Glutamine-dependent NAD(+) synthetase (680 aa).

The region spanning 12 to 276 is the CN hydrolase domain; that stretch reads VRVAACTHHA…EHRSVADVDT (265 aa). E52 functions as the Proton acceptor; for glutaminase activity in the catalytic mechanism. K121 serves as the catalytic For glutaminase activity. Y127 contacts L-glutamine. C176 acts as the Nucleophile; for glutaminase activity in catalysis. The L-glutamine site is built by S203 and R209. 366–373 contributes to the ATP binding site; the sequence is GVSGGLDS. Residue N456 coordinates deamido-NAD(+). T480 contacts ATP. Deamido-NAD(+)-binding positions include E485, 490–493, and K636; that span reads WSTY.

In the C-terminal section; belongs to the NAD synthetase family.

It catalyses the reaction deamido-NAD(+) + L-glutamine + ATP + H2O = L-glutamate + AMP + diphosphate + NAD(+) + H(+). Its pathway is cofactor biosynthesis; NAD(+) biosynthesis; NAD(+) from deamido-NAD(+) (L-Gln route): step 1/1. Catalyzes the ATP-dependent amidation of deamido-NAD to form NAD. Uses L-glutamine as a nitrogen source. This Mycobacterium leprae (strain TN) protein is Glutamine-dependent NAD(+) synthetase.